The sequence spans 340 residues: MISGVPDRWKVVASSLSSNLDASYPTSSSLSTEPIDTRSSSPQGSASTPVDKEKIIRGPVDYLLKCPGKDIRRKLMQAFNEWLRIPEDRLNIIAEIVGLLHTASLLIDDIQDSSKLRRGIPVAHSIFGVAQTINSANYAYFAAQEKLRELNRPKAYEIFTEELLRLHRGQGMDLYWRDSLTCPTEEEYIEMISNKTGGLFRLAIKLMQLESEVTSDFLGLVDLLGVIFQIRDDYQNLQSDLYSKNKGFCEDLTEGKFSFLIIHSINSNPGNQQLLNILRQRSEEESVKKYAVEYIRSTGSFAYCQDRLASFLHEAKMMVNVLEDNVGFSKGIYDILAFLL.

Polar residues predominate over residues 19–48; sequence NLDASYPTSSSLSTEPIDTRSSSPQGSAST. Residues 19–51 are disordered; it reads NLDASYPTSSSLSTEPIDTRSSSPQGSASTPVD. 3 residues coordinate isopentenyl diphosphate: Lys69, Arg72, and His101. Positions 108 and 112 each coordinate Mg(2+). Residue Arg117 participates in dimethylallyl diphosphate binding. Arg118 contributes to the isopentenyl diphosphate binding site. Dimethylallyl diphosphate contacts are provided by Lys195, Thr196, and Gln229. Asp232 serves as a coordination point for Mg(2+). Asn236, Lys246, and Lys256 together coordinate dimethylallyl diphosphate.

The protein belongs to the FPP/GGPP synthase family. Requires Mg(2+) as cofactor.

It catalyses the reaction isopentenyl diphosphate + dimethylallyl diphosphate = (2E)-geranyl diphosphate + diphosphate. The enzyme catalyses isopentenyl diphosphate + (2E)-geranyl diphosphate = (2E,6E)-farnesyl diphosphate + diphosphate. The catalysed reaction is isopentenyl diphosphate + (2E,6E)-farnesyl diphosphate = (2E,6E,10E)-geranylgeranyl diphosphate + diphosphate. Its function is as follows. Geranylgeranyl pyrophosphate synthase; part of the ATM1 gene cluster that mediates the biosynthesis of aflatrem, a tremorgenic mycotoxin with acute neurotoxic effects. Synthesis of geranylgeranyl diphosphate (GGPP) by AtmG (a GGPP synthase) precedes condensation of GGPP with indole 3-glycerol phosphate, followed by epoxidation and cyclization by AtmM (a FAD-dependent monooxygenase) and AtmC (a prenyltransferase) to produce paspaline. AtmB is also essential for paspaline production, but its exact role has not been identified yet. AtmP, a cytochrome P450 monooxygenase, subsequently converts paspaline to 13-desoxypaxilline via PC-M6 by removal of the C-30 methyl group and oxidation at C-10. AtmQ, a cytochrome P450 monooxygenase, then catalyzes the oxidation of 13-desoxypaxilline, first at C-7 to produce paspalicine and then at C-13 to form paspalinine. Finally, AtmD prenylates paspalinine to form aflatrem. The chain is Geranylgeranyl pyrophosphate synthase atmG from Aspergillus flavus.